The primary structure comprises 359 residues: Spore germination protein GerQC (359 aa).

Positions 1-16 are cleaved as a signal peptide; it reads MKRWILFLILSVFLIG. Residue Cys17 is the site of N-palmitoyl cysteine attachment. A lipid anchor (S-diacylglycerol cysteine) is attached at Cys17.

Belongs to the GerABKC lipoprotein family.

It localises to the membrane. Functionally, required for the germination response to inosine. Has no role in L-alanine germination. The protein is Spore germination protein GerQC (gerQC) of Bacillus cereus.